A 287-amino-acid chain; its full sequence is Probable aquaporin PIP1-4 (287 aa).

Met-1 is modified (N-acetylmethionine). Residues 1-36 (MEGKEEDVRVGANKFPERQPIGTSAQSTDKDYKEPP) are disordered. The Cytoplasmic segment spans residues 1-55 (MEGKEEDVRVGANKFPERQPIGTSAQSTDKDYKEPPPAPLFEPGELSSWSFYRAG). A helical transmembrane segment spans residues 56–76 (IAEFIATFLFLYITVLTVMGV). Topologically, residues 77–92 (KRAPNMCASVGIQGIA) are extracellular. A helical transmembrane segment spans residues 93–113 (WAFGGMIFALVYCTAGISGGH). The Cytoplasmic portion of the chain corresponds to 114 to 133 (INPAVTFGLFLARKLSLTRA). The short motif at 115 to 117 (NPA) is the NPA 1 element. A helical membrane pass occupies residues 134-154 (VFYMIMQCLGAICGAGVVKGF). Residues 155-175 (QPTPYQTLGGGANTVAHGYTK) are Extracellular-facing. Residues 176–196 (GSGLGAEIIGTFVLVYTVFSA) form a helical membrane-spanning segment. Residues 197 to 209 (TDAKRSARDSHVP) are Cytoplasmic-facing. A helical membrane pass occupies residues 210–230 (ILAPLPIGFAVFLVHLATIPI). Over 231-257 (TGTGINPARSLGAAIIYNKDHSWDDHW) the chain is Extracellular. The NPA 2 signature appears at 236–238 (NPA). The helical transmembrane segment at 258–278 (IFWVGPFIGAALAALYHQIVI) threads the bilayer. Residues 279–287 (RAIPFKSKS) are Cytoplasmic-facing. The residue at position 285 (Ser-285) is a Phosphoserine.

This sequence belongs to the MIP/aquaporin (TC 1.A.8) family. PIP (TC 1.A.8.11) subfamily. Predominantly expressed in roots and green siliques. Also expressed above ground and in flower buds.

The protein localises to the cell membrane. Functionally, aquaporins facilitate the transport of water and small neutral solutes across cell membranes. In Arabidopsis thaliana (Mouse-ear cress), this protein is Probable aquaporin PIP1-4 (PIP1.4).